The following is a 286-amino-acid chain: 3-methyl-2-oxobutanoate hydroxymethyltransferase (286 aa).

Residues D51 and D90 each contribute to the Mg(2+) site. 3-methyl-2-oxobutanoate-binding positions include 51 to 52 (DS), D90, and K120. E122 is a Mg(2+) binding site. The active-site Proton acceptor is the E189. The tract at residues 263-286 (TFPGPSHVFSGSKASSDLNGGDES) is disordered.

The protein belongs to the PanB family. Homodecamer; pentamer of dimers. Mg(2+) is required as a cofactor.

Its subcellular location is the cytoplasm. The catalysed reaction is 3-methyl-2-oxobutanoate + (6R)-5,10-methylene-5,6,7,8-tetrahydrofolate + H2O = 2-dehydropantoate + (6S)-5,6,7,8-tetrahydrofolate. It participates in cofactor biosynthesis; (R)-pantothenate biosynthesis; (R)-pantoate from 3-methyl-2-oxobutanoate: step 1/2. In terms of biological role, catalyzes the reversible reaction in which hydroxymethyl group from 5,10-methylenetetrahydrofolate is transferred onto alpha-ketoisovalerate to form ketopantoate. This Mesorhizobium japonicum (strain LMG 29417 / CECT 9101 / MAFF 303099) (Mesorhizobium loti (strain MAFF 303099)) protein is 3-methyl-2-oxobutanoate hydroxymethyltransferase.